The sequence spans 366 residues: Inactive protein RESTRICTED TEV MOVEMENT 2 (366 aa).

The 108-residue stretch at 14–121 folds into the sHSP domain; it reads VQYEDFVPKS…LPETSRTEAA (108 aa). Residues 129–133 form an A-1 repeat; sequence LEEKR. The interval 129–220 is 6 X 5 AA repeats A of L-E-E-[SKR]-[ERK]; the sequence is LEEKRLLEES…LEERRLEERK (92 aa). One copy of the A-2 repeat lies at 135–139; that stretch reads LEESR. The stretch at 156–160 is one A-3 repeat; the sequence is LEEKE. Residues 163 to 176 form a B-1 repeat; the sequence is IRKLQEEAKAKEEA. Positions 163–206 are 3 X 14 AA repeats B of [IMA]-[RK]-K-L-Q-E-E-A-K-A-K-E-[EK]-[LA]; it reads IRKLQEEAKAKEEAEMRKLQEEAKANEEAAAKKLQEEIEAKEKL. One copy of the B-2 repeat lies at 178–191; sequence MRKLQEEAKANEEA. A B-3 repeat occupies 193 to 205; that stretch reads AKKLQEEIEAKEK. One copy of the A-4 repeat lies at 206–210; that stretch reads LEERK. The stretch at 211–215 is one A-5 repeat; the sequence is LEERR. One copy of the A-6 repeat lies at 216 to 220; it reads LEERK. Residues 322-342 form a helical membrane-spanning segment; sequence LMMNVGVAALVIFALGAYVSY. Residues 345–366 form a disordered region; sequence CSSSSSSSSSSPSSSSSSTKPE. Residues 346–366 are compositionally biased toward low complexity; that stretch reads SSSSSSSSSSPSSSSSSTKPE.

It belongs to the small heat shock protein (HSP20) family.

It localises to the cell membrane. Seems to not be involved in heat resistance. Unable to mediate restriction of long-distance movement of the pathogenic tobacco etch virus (TEV) without causing a hypersensitive response or inducing systemic acquired resistance. This is Inactive protein RESTRICTED TEV MOVEMENT 2 (RTM2) from Arabidopsis thaliana (Mouse-ear cress).